The following is a 355-amino-acid chain: C-C chemokine receptor type 1 (355 aa).

Residues 1–34 (MEISDFTEAYPTTTEFDYGDSTPCQKTAVRAFGA) lie on the Extracellular side of the membrane. A helical transmembrane segment spans residues 35-60 (GLLPPLYSLVFIIGVVGNVLVILVLM). The Cytoplasmic portion of the chain corresponds to 61–64 (QHRR). A helical membrane pass occupies residues 65–91 (LQSMTSIYLFNLAVSDLVFLFTLPFWI). At 92–107 (DYKLKDDWIFGDAMCK) the chain is on the extracellular side. Cys106 and Cys183 are disulfide-bonded. A helical membrane pass occupies residues 108 to 129 (LLSGFYYLGLYSEIFFIILLTI). The Cytoplasmic portion of the chain corresponds to 130 to 146 (DRYLAIVHAVFALRART). Residues 147–171 (VTFGIITSIITWALAILASMPALYF) traverse the membrane as a helical segment. The Extracellular portion of the chain corresponds to 172 to 197 (FKAQWEFTHRTCSPHFPYKSLKQWKR). The chain crosses the membrane as a helical span at residues 198-223 (FQALKLNLLGLILPLLVMIICYAGII). The Cytoplasmic portion of the chain corresponds to 224 to 239 (RILLRRPSEKKVKAVR). The helical transmembrane segment at 240 to 264 (LIFAITLLFFLLWTPYNLSVFVSAF) threads the bilayer. Over 265-281 (QDVLFTNQCEQSKQLDL) the chain is Extracellular. Residues 282 to 305 (AMQVTEVIAYTHCCVNPIIYVFVG) form a helical membrane-spanning segment. Over 306–355 (ERFWKYLRQLFQRHVAIPLAKWLPFLSVDQLERTSSISPSTGEHELSAGF) the chain is Cytoplasmic.

Belongs to the G-protein coupled receptor 1 family. As to quaternary structure, interacts with CREB3. Interacts with CCL3. Interacts with CCL15. Interacts with CCL23. Interacts with GNAI1. Interacts with PF4/CXCL4. In terms of tissue distribution, detected in the heart, spleen, lung, peritoneal exudate cells and leukocytes.

Its subcellular location is the cell membrane. Functionally, chemokine receptor that plays a crucial role in regulating immune cell migration, inflammation, and immune responses. Contributes to the inflammatory response by recruiting immune cells, such as monocytes, macrophages, T-cells, and dendritic cells, to sites of inflammation for the clearance of pathogens and the resolution of tissue damage. When activated by its ligands including CCL3, CCL5-9, CCL13-16 and CCL23, triggers a signaling cascade within immune cells, leading to their migration towards the source of the chemokine. For example, mediates neutrophil migration after activation by CCL3 leading to the sequential release of TNF-alpha and leukotriene B4. Also mediates monocyte migration upon CXCL4 binding. Activation by CCL5 results in neuroinflammation through the ERK1/2 signaling pathway. The polypeptide is C-C chemokine receptor type 1 (Ccr1) (Mus musculus (Mouse)).